A 189-amino-acid polypeptide reads, in one-letter code: Peptidyl-tRNA hydrolase (189 aa).

Y18 provides a ligand contact to tRNA. H23 (proton acceptor) is an active-site residue. F67, N69, and N115 together coordinate tRNA.

Belongs to the PTH family. Monomer.

The protein resides in the cytoplasm. The catalysed reaction is an N-acyl-L-alpha-aminoacyl-tRNA + H2O = an N-acyl-L-amino acid + a tRNA + H(+). Its function is as follows. Hydrolyzes ribosome-free peptidyl-tRNAs (with 1 or more amino acids incorporated), which drop off the ribosome during protein synthesis, or as a result of ribosome stalling. Functionally, catalyzes the release of premature peptidyl moieties from peptidyl-tRNA molecules trapped in stalled 50S ribosomal subunits, and thus maintains levels of free tRNAs and 50S ribosomes. The protein is Peptidyl-tRNA hydrolase of Leptospira borgpetersenii serovar Hardjo-bovis (strain JB197).